The following is a 409-amino-acid chain: Pectin acetylesterase 4 (409 aa).

Residues 1–32 (MVIRSLLQCRTWSKSDWLLASIGIVLIVYSFS) form the signal peptide. 2 N-linked (GlcNAc...) asparagine glycosylation sites follow: Asn36 and Asn163. Active-site charge relay system residues include Ser199, Asp295, and His362. N-linked (GlcNAc...) asparagine glycans are attached at residues Asn379 and Asn406.

Belongs to the pectinacetylesterase family.

It localises to the secreted. It is found in the cell wall. Functionally, hydrolyzes acetyl esters in homogalacturonan regions of pectin. In type I primary cell wall, galacturonic acid residues of pectin can be acetylated at the O-2 and O-3 positions. Decreasing the degree of acetylation of pectin gels in vitro alters their physical properties. The protein is Pectin acetylesterase 4 of Arabidopsis thaliana (Mouse-ear cress).